We begin with the raw amino-acid sequence, 257 residues long: MTKTLTNKLAKKDHAAVVTYIMGGDGGLDNLEEQLLFLEKSGVSAIEIGIPFSDPVADGPIIQLAGLRALKEQVSLEAILNKLARSKVQIPLIIMSYINPIFHLGIPKFVELVQKTPVKGLIIPDLPYEHQTLITPELQGTDIALIPLVSLTSPKERLEEIAKQAEGFIYAVTVNGTTGVRSEFDAHIDNHLAYLKSISPVPVLAGFGVSSIEHVEKFAHVCDGVIIGSKVVQMLHEEKTAELGAFLQKAAEVRIEN.

Active-site proton acceptor residues include Glu-47 and Asp-58.

Belongs to the TrpA family. As to quaternary structure, tetramer of two alpha and two beta chains.

It catalyses the reaction (1S,2R)-1-C-(indol-3-yl)glycerol 3-phosphate + L-serine = D-glyceraldehyde 3-phosphate + L-tryptophan + H2O. The protein operates within amino-acid biosynthesis; L-tryptophan biosynthesis; L-tryptophan from chorismate: step 5/5. Functionally, the alpha subunit is responsible for the aldol cleavage of indoleglycerol phosphate to indole and glyceraldehyde 3-phosphate. The sequence is that of Tryptophan synthase alpha chain from Listeria monocytogenes serotype 4b (strain F2365).